Here is a 612-residue protein sequence, read N- to C-terminus: Threonine--tRNA ligase (612 aa).

The tract at residues 218–509 (DHRKLGVELG…LSEHFGGNFP (292 aa)) is catalytic. Residues Cys310, His361, and His486 each coordinate Zn(2+).

Belongs to the class-II aminoacyl-tRNA synthetase family. As to quaternary structure, homodimer. Zn(2+) serves as cofactor.

The protein resides in the cytoplasm. It carries out the reaction tRNA(Thr) + L-threonine + ATP = L-threonyl-tRNA(Thr) + AMP + diphosphate + H(+). Functionally, catalyzes the attachment of threonine to tRNA(Thr) in a two-step reaction: L-threonine is first activated by ATP to form Thr-AMP and then transferred to the acceptor end of tRNA(Thr). Also edits incorrectly charged L-seryl-tRNA(Thr). The sequence is that of Threonine--tRNA ligase from Helicobacter pylori (strain J99 / ATCC 700824) (Campylobacter pylori J99).